The following is a 249-amino-acid chain: Tryptophan synthase alpha chain (249 aa).

Catalysis depends on proton acceptor residues Glu-43 and Asp-54.

Belongs to the TrpA family. In terms of assembly, tetramer of two alpha and two beta chains.

It carries out the reaction (1S,2R)-1-C-(indol-3-yl)glycerol 3-phosphate + L-serine = D-glyceraldehyde 3-phosphate + L-tryptophan + H2O. The protein operates within amino-acid biosynthesis; L-tryptophan biosynthesis; L-tryptophan from chorismate: step 5/5. In terms of biological role, the alpha subunit is responsible for the aldol cleavage of indoleglycerol phosphate to indole and glyceraldehyde 3-phosphate. In Campylobacter jejuni subsp. doylei (strain ATCC BAA-1458 / RM4099 / 269.97), this protein is Tryptophan synthase alpha chain.